A 289-amino-acid chain; its full sequence is Polyamine aminopropyltransferase (289 aa).

The PABS domain maps to 5-245; it reads PGPIVLVEPL…YAVNYILGSL (241 aa). Residue Gln-36 participates in S-methyl-5'-thioadenosine binding. Spermidine is bound by residues His-67 and Glu-91. S-methyl-5'-thioadenosine contacts are provided by residues Asp-111 and 143–144; that span reads DG. The active-site Proton acceptor is the Asp-164.

The protein belongs to the spermidine/spermine synthase family. In terms of assembly, homodimer or homotetramer.

Its subcellular location is the cytoplasm. The catalysed reaction is S-adenosyl 3-(methylsulfanyl)propylamine + putrescine = S-methyl-5'-thioadenosine + spermidine + H(+). It functions in the pathway amine and polyamine biosynthesis; spermidine biosynthesis; spermidine from putrescine: step 1/1. Functionally, catalyzes the irreversible transfer of a propylamine group from the amino donor S-adenosylmethioninamine (decarboxy-AdoMet) to putrescine (1,4-diaminobutane) to yield spermidine. In Pyrobaculum arsenaticum (strain DSM 13514 / JCM 11321 / PZ6), this protein is Polyamine aminopropyltransferase.